A 362-amino-acid polypeptide reads, in one-letter code: Protein RecA (362 aa).

77 to 84 provides a ligand contact to ATP; that stretch reads GPESSGKT.

Belongs to the RecA family.

It localises to the cytoplasm. Can catalyze the hydrolysis of ATP in the presence of single-stranded DNA, the ATP-dependent uptake of single-stranded DNA by duplex DNA, and the ATP-dependent hybridization of homologous single-stranded DNAs. It interacts with LexA causing its activation and leading to its autocatalytic cleavage. This chain is Protein RecA, found in Allorhizobium ampelinum (strain ATCC BAA-846 / DSM 112012 / S4) (Agrobacterium vitis (strain S4)).